The primary structure comprises 99 residues: UPF0213 protein PC1_0597 (99 aa).

In terms of domain architecture, GIY-YIG spans 8–83 (PQWYLYILRT…KQLSKNQKER (76 aa)).

This sequence belongs to the UPF0213 family.

This Pectobacterium carotovorum subsp. carotovorum (strain PC1) protein is UPF0213 protein PC1_0597.